The chain runs to 309 residues: Sulfate adenylyltransferase subunit 2 (309 aa).

The protein belongs to the PAPS reductase family. CysD subfamily. In terms of assembly, heterodimer composed of CysD, the smaller subunit, and CysN.

It carries out the reaction sulfate + ATP + H(+) = adenosine 5'-phosphosulfate + diphosphate. It participates in sulfur metabolism; hydrogen sulfide biosynthesis; sulfite from sulfate: step 1/3. In terms of biological role, with CysN forms the ATP sulfurylase (ATPS) that catalyzes the adenylation of sulfate producing adenosine 5'-phosphosulfate (APS) and diphosphate, the first enzymatic step in sulfur assimilation pathway. APS synthesis involves the formation of a high-energy phosphoric-sulfuric acid anhydride bond driven by GTP hydrolysis by CysN coupled to ATP hydrolysis by CysD. The sequence is that of Sulfate adenylyltransferase subunit 2 from Mycobacterium bovis (strain ATCC BAA-935 / AF2122/97).